Here is a 254-residue protein sequence, read N- to C-terminus: 3-beta-hydroxysteroid dehydrogenase (254 aa).

Residues 12-40 (VTGG…SDIN) and D61 contribute to the NAD(+) site. S139 contributes to the substrate binding site. The active-site Proton acceptor is Y152. Residue K156 coordinates NAD(+).

It belongs to the short-chain dehydrogenases/reductases (SDR) family. In terms of assembly, homotetramer.

The enzyme catalyses testosterone + NAD(+) = androst-4-ene-3,17-dione + NADH + H(+). It carries out the reaction testosterone + NADP(+) = androst-4-ene-3,17-dione + NADPH + H(+). The sequence is that of 3-beta-hydroxysteroid dehydrogenase from Comamonas testosteroni (Pseudomonas testosteroni).